A 188-amino-acid chain; its full sequence is MSRLRIFADTNPATPEFDSRDGDAIAAQLQKIGVTFERWHASAPVEPGATPEQVMDAYRADIDRISAERGFKTVDVVSIAPDNPKREEMRAKFLDEHFHKEDEVRFFVAGSGLFTLHVDAKVYEIECVKDDLIAVPDGTLHWFDMGPEPHFVAIRFFTEPDGWVGHFTGTEIAKQFPRYAPEKPHKAS.

Fe(2+)-binding residues include His-97, His-99, Glu-103, and His-141. Ni(2+) is bound by residues His-97, His-99, Glu-103, and His-141.

This sequence belongs to the acireductone dioxygenase (ARD) family. As to quaternary structure, monomer. Fe(2+) is required as a cofactor. Requires Ni(2+) as cofactor.

It carries out the reaction 1,2-dihydroxy-5-(methylsulfanyl)pent-1-en-3-one + O2 = 3-(methylsulfanyl)propanoate + CO + formate + 2 H(+). The enzyme catalyses 1,2-dihydroxy-5-(methylsulfanyl)pent-1-en-3-one + O2 = 4-methylsulfanyl-2-oxobutanoate + formate + 2 H(+). Its pathway is amino-acid biosynthesis; L-methionine biosynthesis via salvage pathway; L-methionine from S-methyl-5-thio-alpha-D-ribose 1-phosphate: step 5/6. Catalyzes 2 different reactions between oxygen and the acireductone 1,2-dihydroxy-3-keto-5-methylthiopentene (DHK-MTPene) depending upon the metal bound in the active site. Fe-containing acireductone dioxygenase (Fe-ARD) produces formate and 2-keto-4-methylthiobutyrate (KMTB), the alpha-ketoacid precursor of methionine in the methionine recycle pathway. Ni-containing acireductone dioxygenase (Ni-ARD) produces methylthiopropionate, carbon monoxide and formate, and does not lie on the methionine recycle pathway. The polypeptide is Acireductone dioxygenase (Xanthomonas euvesicatoria pv. vesicatoria (strain 85-10) (Xanthomonas campestris pv. vesicatoria)).